A 265-amino-acid polypeptide reads, in one-letter code: 3-methyl-2-oxobutanoate hydroxymethyltransferase (265 aa).

Residues D43 and D82 each coordinate Mg(2+). 3-methyl-2-oxobutanoate is bound by residues 43–44 (DS), D82, and K111. Residue E113 participates in Mg(2+) binding. E180 (proton acceptor) is an active-site residue.

It belongs to the PanB family. As to quaternary structure, homodecamer; pentamer of dimers. Mg(2+) is required as a cofactor.

Its subcellular location is the cytoplasm. The enzyme catalyses 3-methyl-2-oxobutanoate + (6R)-5,10-methylene-5,6,7,8-tetrahydrofolate + H2O = 2-dehydropantoate + (6S)-5,6,7,8-tetrahydrofolate. It functions in the pathway cofactor biosynthesis; (R)-pantothenate biosynthesis; (R)-pantoate from 3-methyl-2-oxobutanoate: step 1/2. Its function is as follows. Catalyzes the reversible reaction in which hydroxymethyl group from 5,10-methylenetetrahydrofolate is transferred onto alpha-ketoisovalerate to form ketopantoate. The sequence is that of 3-methyl-2-oxobutanoate hydroxymethyltransferase from Francisella tularensis subsp. mediasiatica (strain FSC147).